A 443-amino-acid polypeptide reads, in one-letter code: MEGIERENGCFHTFCPIASVAWLHRKIKDSFFLIVGTHTCAHFIQTALDVMVYAHSRFGFAVLEESDLVAASPTAELAKVVEDIKAEWQPKVIFLLSTCSCDILKLDLENSSKDLTIRFGFPVVPVQTSGLDRTFTQGEDAVLHALLPFVPKEDPKVAVVEEKKRSWFSFGKDEGNKASVPAAPTRNLVLVGAVTDSTTQQLQWELKQLGLERVDVFPSGDITNMPVINEHTVIVPLQPYLSDTLATLRRERGAKVLTTLLPIGPDGTARFLEAICAEFGLDASPVAEREAQTWRSLESQRALLRGKRIMFLGDNLLEIPLARFLTACGAEVVEAGTPYVHAKDLSEEIARLREKGVPIVESPNFSAQVERIDRLRPDLIVAGLGICNPLEAAGYTTAWSIEFTFAQIHGFVNAIDLIKLFVKPLLKRQALLEQGWTEAGWMS.

3 residues coordinate [4Fe-4S] cluster: C15, C40, and C99.

It belongs to the BchN/ChlN family. As to quaternary structure, protochlorophyllide reductase is composed of three subunits; BchL, BchN and BchB. Forms a heterotetramer of two BchB and two BchN subunits. [4Fe-4S] cluster serves as cofactor.

It carries out the reaction chlorophyllide a + oxidized 2[4Fe-4S]-[ferredoxin] + 2 ADP + 2 phosphate = protochlorophyllide a + reduced 2[4Fe-4S]-[ferredoxin] + 2 ATP + 2 H2O. The protein operates within porphyrin-containing compound metabolism; bacteriochlorophyll biosynthesis (light-independent). Component of the dark-operative protochlorophyllide reductase (DPOR) that uses Mg-ATP and reduced ferredoxin to reduce ring D of protochlorophyllide (Pchlide) to form chlorophyllide a (Chlide). This reaction is light-independent. The NB-protein (BchN-BchB) is the catalytic component of the complex. This is Light-independent protochlorophyllide reductase subunit N from Heliobacterium modesticaldum (strain ATCC 51547 / Ice1).